We begin with the raw amino-acid sequence, 294 residues long: Protoheme IX farnesyltransferase (294 aa).

The next 9 helical transmembrane spans lie at 8–28 (LTKPGIVLGNLMSSAGGFLIA), 35–55 (YSLFITMIVGTALVIASGCVL), 81–101 (IFLNQSIFYAVILSIFGFLFL), 107–127 (VLTIYLSAIGLFIYVGVYSLW), 133–153 (IYSIMVGSISGAMPPVIGYCA), 163–183 (LMLLIIFSLWQIPHSHSIAIL), 209–226 (MVVYIIGFIIATILFTVM), 230–252 (SYIFLIIISIMNLWWLHMGFYGY), and 266–286 (FLLSLIIIISLNLLLSLDHIL).

This sequence belongs to the UbiA prenyltransferase family. Protoheme IX farnesyltransferase subfamily.

It localises to the cell inner membrane. It catalyses the reaction heme b + (2E,6E)-farnesyl diphosphate + H2O = Fe(II)-heme o + diphosphate. It functions in the pathway porphyrin-containing compound metabolism; heme O biosynthesis; heme O from protoheme: step 1/1. In terms of biological role, converts heme B (protoheme IX) to heme O by substitution of the vinyl group on carbon 2 of heme B porphyrin ring with a hydroxyethyl farnesyl side group. The sequence is that of Protoheme IX farnesyltransferase from Blochmanniella pennsylvanica (strain BPEN).